The primary structure comprises 178 residues: Thymidine kinase (178 aa).

13–20 contacts ATP; the sequence is GPMFAGKS. Catalysis depends on glutamate 85, which acts as the Proton acceptor. Residue phenylalanine 115 coordinates substrate. Zn(2+) contacts are provided by cysteine 140 and cysteine 143. Position 159–163 (159–163) interacts with substrate; the sequence is IEVIG. Residues cysteine 172 and cysteine 175 each coordinate Zn(2+).

This sequence belongs to the thymidine kinase family.

It carries out the reaction thymidine + ATP = dTMP + ADP + H(+). The sequence is that of Thymidine kinase (TK) from Oryctolagus cuniculus (Rabbit).